A 299-amino-acid polypeptide reads, in one-letter code: 4-hydroxy-tetrahydrodipicolinate synthase (299 aa).

Thr44 serves as a coordination point for pyruvate. Tyr133 acts as the Proton donor/acceptor in catalysis. Lys162 (schiff-base intermediate with substrate) is an active-site residue. Ile204 contributes to the pyruvate binding site.

This sequence belongs to the DapA family. In terms of assembly, homotetramer; dimer of dimers.

The protein localises to the cytoplasm. The enzyme catalyses L-aspartate 4-semialdehyde + pyruvate = (2S,4S)-4-hydroxy-2,3,4,5-tetrahydrodipicolinate + H2O + H(+). It functions in the pathway amino-acid biosynthesis; L-lysine biosynthesis via DAP pathway; (S)-tetrahydrodipicolinate from L-aspartate: step 3/4. In terms of biological role, catalyzes the condensation of (S)-aspartate-beta-semialdehyde [(S)-ASA] and pyruvate to 4-hydroxy-tetrahydrodipicolinate (HTPA). In Thermus thermophilus (strain ATCC BAA-163 / DSM 7039 / HB27), this protein is 4-hydroxy-tetrahydrodipicolinate synthase.